The primary structure comprises 304 residues: Nicotinamide/nicotinic acid mononucleotide adenylyltransferase 2 (304 aa).

S16 and F17 together coordinate NAD(+). H24 is an ATP binding site. Residues W92 and T95 each contribute to the NAD(+) site. S-palmitoyl cysteine attachment occurs at residues C161 and C162. NAD(+)-binding residues include G197, D199, L209, W210, and R229. 268 to 271 serves as a coordination point for ATP; sequence TKSR.

This sequence belongs to the eukaryotic NMN adenylyltransferase family. In terms of assembly, monomer. Requires Mg(2+) as cofactor.

It localises to the golgi apparatus membrane. Its subcellular location is the cytoplasmic vesicle membrane. It is found in the cytoplasm. The protein resides in the cell projection. The protein localises to the axon. The catalysed reaction is beta-nicotinamide D-ribonucleotide + ATP + H(+) = diphosphate + NAD(+). It carries out the reaction nicotinate beta-D-ribonucleotide + ATP + H(+) = deamido-NAD(+) + diphosphate. Its pathway is cofactor biosynthesis; NAD(+) biosynthesis; NAD(+) from nicotinamide D-ribonucleotide: step 1/1. It functions in the pathway cofactor biosynthesis; NAD(+) biosynthesis; deamido-NAD(+) from nicotinate D-ribonucleotide: step 1/1. Functionally, nicotinamide/nicotinate-nucleotide adenylyltransferase that acts as an axon maintenance factor. Axon survival factor required for the maintenance of healthy axons: acts by delaying Wallerian axon degeneration, an evolutionarily conserved process that drives the loss of damaged axons. Catalyzes the formation of NAD(+) from nicotinamide mononucleotide (NMN) and ATP. Can also use the deamidated form; nicotinic acid mononucleotide (NaMN) as substrate but with a lower efficiency. Also catalyzes the reverse reaction, i.e. the pyrophosphorolytic cleavage of NAD(+). For the pyrophosphorolytic activity prefers NAD(+), NADH and NaAD as substrates and degrades nicotinic acid adenine dinucleotide phosphate (NHD) less effectively. Also acts as an activator of ADP-ribosylation by supporting the catalytic activity of PARP16 and promoting mono-ADP-ribosylation of ribosomes by PARP16. May be involved in the maintenance of axonal integrity. This is Nicotinamide/nicotinic acid mononucleotide adenylyltransferase 2 (nmnat2) from Danio rerio (Zebrafish).